The primary structure comprises 55 residues: ATP synthase protein 8 (55 aa).

Residues 4–24 traverse the membrane as a helical segment; the sequence is LDPAPWFSMLTVSWLIIFLLI.

The protein belongs to the ATPase protein 8 family. F-type ATPases have 2 components, CF(1) - the catalytic core - and CF(0) - the membrane proton channel.

It is found in the mitochondrion membrane. Mitochondrial membrane ATP synthase (F(1)F(0) ATP synthase or Complex V) produces ATP from ADP in the presence of a proton gradient across the membrane which is generated by electron transport complexes of the respiratory chain. F-type ATPases consist of two structural domains, F(1) - containing the extramembraneous catalytic core and F(0) - containing the membrane proton channel, linked together by a central stalk and a peripheral stalk. During catalysis, ATP synthesis in the catalytic domain of F(1) is coupled via a rotary mechanism of the central stalk subunits to proton translocation. Part of the complex F(0) domain. Minor subunit located with subunit a in the membrane. The protein is ATP synthase protein 8 (MT-ATP8) of Petromyzon marinus (Sea lamprey).